Here is a 298-residue protein sequence, read N- to C-terminus: GTPase Era (298 aa).

The Era-type G domain occupies 3-170 (KSGFVAILGR…VQLLKDNLEE (168 aa)). Positions 11–18 (GRPNVGKS) are G1. 11 to 18 (GRPNVGKS) contributes to the GTP binding site. Residues 37 to 41 (QTTRN) form a G2 region. The tract at residues 58 to 61 (DTPG) is G3. GTP contacts are provided by residues 58–62 (DTPGI) and 120–123 (NKID). A G4 region spans residues 120-123 (NKID). A G5 region spans residues 149-151 (ISA). A KH type-2 domain is found at 201–279 (TQQEVPHSVA…YLETWVKVKK (79 aa)).

The protein belongs to the TRAFAC class TrmE-Era-EngA-EngB-Septin-like GTPase superfamily. Era GTPase family. As to quaternary structure, monomer.

The protein localises to the cytoplasm. Its subcellular location is the cell membrane. Functionally, an essential GTPase that binds both GDP and GTP, with rapid nucleotide exchange. Plays a role in 16S rRNA processing and 30S ribosomal subunit biogenesis and possibly also in cell cycle regulation and energy metabolism. The polypeptide is GTPase Era (Streptococcus equi subsp. zooepidemicus (strain MGCS10565)).